A 276-amino-acid chain; its full sequence is Large ribosomal subunit protein uL2 (276 aa).

The disordered stretch occupies residues 226-276 (MNSVDHPHGGGEGKTSGGRHPVSPWGTPTKGYKTRSNKRTDKLILRHRNKG).

Belongs to the universal ribosomal protein uL2 family. Part of the 50S ribosomal subunit. Forms a bridge to the 30S subunit in the 70S ribosome.

In terms of biological role, one of the primary rRNA binding proteins. Required for association of the 30S and 50S subunits to form the 70S ribosome, for tRNA binding and peptide bond formation. It has been suggested to have peptidyltransferase activity; this is somewhat controversial. Makes several contacts with the 16S rRNA in the 70S ribosome. This Vesicomyosocius okutanii subsp. Calyptogena okutanii (strain HA) protein is Large ribosomal subunit protein uL2.